Reading from the N-terminus, the 346-residue chain is Phosphate acyltransferase (346 aa).

This sequence belongs to the PlsX family. As to quaternary structure, homodimer. Probably interacts with PlsY.

Its subcellular location is the cytoplasm. It catalyses the reaction a fatty acyl-[ACP] + phosphate = an acyl phosphate + holo-[ACP]. It functions in the pathway lipid metabolism; phospholipid metabolism. Catalyzes the reversible formation of acyl-phosphate (acyl-PO(4)) from acyl-[acyl-carrier-protein] (acyl-ACP). This enzyme utilizes acyl-ACP as fatty acyl donor, but not acyl-CoA. This chain is Phosphate acyltransferase, found in Brucella suis biovar 1 (strain 1330).